A 281-amino-acid chain; its full sequence is Glutamate racemase (281 aa).

Residues 10–11 (DS) and 42–43 (YG) contribute to the substrate site. Cysteine 74 (proton donor/acceptor) is an active-site residue. 75–76 (NT) contributes to the substrate binding site. The active-site Proton donor/acceptor is the cysteine 190. 191 to 192 (TH) serves as a coordination point for substrate.

It belongs to the aspartate/glutamate racemases family.

It carries out the reaction L-glutamate = D-glutamate. It participates in cell wall biogenesis; peptidoglycan biosynthesis. In terms of biological role, provides the (R)-glutamate required for cell wall biosynthesis. The polypeptide is Glutamate racemase (Oenococcus oeni (strain ATCC BAA-331 / PSU-1)).